A 217-amino-acid chain; its full sequence is Ras-like protein (217 aa).

GTP is bound at residue 17–24 (GGGGVGKS). The Effector region motif lies at 39 to 47 (YDPTIEDSY). Residues 64-68 (DTAGQ) and 123-126 (NKCD) each bind GTP. The segment at 181–200 (TGRMMTGGGGGGPPGTYAGK) is disordered. Residues 185–194 (MTGGGGGGPP) are compositionally biased toward gly residues. S-palmitoyl cysteine attachment occurs at residues cysteine 210 and cysteine 211. At cysteine 214 the chain carries Cysteine methyl ester. Cysteine 214 carries S-geranylgeranyl cysteine lipidation. A propeptide spans 215-217 (VVL) (removed in mature form).

Belongs to the small GTPase superfamily. Ras family.

It is found in the cell membrane. The enzyme catalyses GTP + H2O = GDP + phosphate + H(+). Its activity is regulated as follows. Alternates between an inactive form bound to GDP and an active form bound to GTP. Activated by a guanine nucleotide-exchange factor (GEF) and inactivated by a GTPase-activating protein (GAP). In Lentinula edodes (Shiitake mushroom), this protein is Ras-like protein.